Reading from the N-terminus, the 493-residue chain is NADH-quinone oxidoreductase subunit N 2 (493 aa).

14 helical membrane passes run Ile16–Ile36, Phe45–Gln65, Gly87–Ser107, Gly119–Thr139, Leu141–Phe161, Leu176–Ile196, Val219–Phe239, Leu258–Leu278, Trp285–Ile305, Leu313–Asn333, Ile340–Ala360, Ala385–Leu405, Gly421–Val441, and Cys464–Leu484.

Belongs to the complex I subunit 2 family. NDH-1 is composed of 14 different subunits. Subunits NuoA, H, J, K, L, M, N constitute the membrane sector of the complex.

It localises to the cell inner membrane. The enzyme catalyses a quinone + NADH + 5 H(+)(in) = a quinol + NAD(+) + 4 H(+)(out). Its function is as follows. NDH-1 shuttles electrons from NADH, via FMN and iron-sulfur (Fe-S) centers, to quinones in the respiratory chain. The immediate electron acceptor for the enzyme in this species is believed to be ubiquinone. Couples the redox reaction to proton translocation (for every two electrons transferred, four hydrogen ions are translocated across the cytoplasmic membrane), and thus conserves the redox energy in a proton gradient. The protein is NADH-quinone oxidoreductase subunit N 2 of Solibacter usitatus (strain Ellin6076).